Reading from the N-terminus, the 382-residue chain is ATP phosphoribosyltransferase regulatory subunit (382 aa).

This sequence belongs to the class-II aminoacyl-tRNA synthetase family. HisZ subfamily. Heteromultimer composed of HisG and HisZ subunits.

The protein localises to the cytoplasm. It functions in the pathway amino-acid biosynthesis; L-histidine biosynthesis; L-histidine from 5-phospho-alpha-D-ribose 1-diphosphate: step 1/9. Its function is as follows. Required for the first step of histidine biosynthesis. May allow the feedback regulation of ATP phosphoribosyltransferase activity by histidine. This chain is ATP phosphoribosyltransferase regulatory subunit, found in Lacticaseibacillus paracasei (strain ATCC 334 / BCRC 17002 / CCUG 31169 / CIP 107868 / KCTC 3260 / NRRL B-441) (Lactobacillus paracasei).